The following is a 131-amino-acid chain: Aspartate 1-decarboxylase (131 aa).

Catalysis depends on serine 25, which acts as the Schiff-base intermediate with substrate; via pyruvic acid. The residue at position 25 (serine 25) is a Pyruvic acid (Ser). Residue threonine 57 participates in substrate binding. The active-site Proton donor is tyrosine 58. 73-75 serves as a coordination point for substrate; sequence GAA.

This sequence belongs to the PanD family. In terms of assembly, heterooctamer of four alpha and four beta subunits. Requires pyruvate as cofactor. Post-translationally, is synthesized initially as an inactive proenzyme, which is activated by self-cleavage at a specific serine bond to produce a beta-subunit with a hydroxyl group at its C-terminus and an alpha-subunit with a pyruvoyl group at its N-terminus.

The protein resides in the cytoplasm. The enzyme catalyses L-aspartate + H(+) = beta-alanine + CO2. It functions in the pathway cofactor biosynthesis; (R)-pantothenate biosynthesis; beta-alanine from L-aspartate: step 1/1. In terms of biological role, catalyzes the pyruvoyl-dependent decarboxylation of aspartate to produce beta-alanine. This is Aspartate 1-decarboxylase from Anaeromyxobacter dehalogenans (strain 2CP-C).